A 231-amino-acid chain; its full sequence is UPF0758 protein aq_1610 (231 aa).

An MPN domain is found at Ser-110 to Leu-231. 3 residues coordinate Zn(2+): His-180, His-182, and Asp-193. The JAMM motif signature appears at His-180–Asp-193.

It belongs to the UPF0758 family.

This is UPF0758 protein aq_1610 from Aquifex aeolicus (strain VF5).